Here is a 557-residue protein sequence, read N- to C-terminus: Large cysteine-rich periplasmic protein omcB (557 aa).

Residues 1–22 (MSKLIRRVVTVLALTSMASSFA) form the signal peptide. The propeptide occupies 23–40 (SGKIEAAAAESLATRFIA).

As to quaternary structure, part of a disulfide cross-linked outer membrane complex (COMC) composed of the major outer membrane porin (MOMP), the small cysteine-rich protein (omcA) and the large cysteine-rich periplasmic protein (omcB).

The protein resides in the periplasm. Its function is as follows. In elementary bodies (EBs, the infectious stage, which is able to survive outside the host cell) provides the structural integrity of the outer envelope through disulfide cross-links with the small cysteine-rich protein and the major outer membrane porin. It has been described in publications as the Sarkosyl-insoluble COMC (Chlamydia outer membrane complex), and serves as the functional equivalent of peptidoglycan. The chain is Large cysteine-rich periplasmic protein omcB (omcB) from Chlamydophila psittaci (strain ATCC VR-125 / 6BC) (Chlamydia psittaci).